Consider the following 435-residue polypeptide: Enolase (435 aa).

Glutamine 167 contacts (2R)-2-phosphoglycerate. The Proton donor role is filled by glutamate 209. Mg(2+) is bound by residues aspartate 246, glutamate 292, and aspartate 319. Residues lysine 344, arginine 373, serine 374, and lysine 395 each contribute to the (2R)-2-phosphoglycerate site. The active-site Proton acceptor is the lysine 344.

Belongs to the enolase family. It depends on Mg(2+) as a cofactor.

It localises to the cytoplasm. The protein resides in the secreted. It is found in the cell surface. The enzyme catalyses (2R)-2-phosphoglycerate = phosphoenolpyruvate + H2O. It functions in the pathway carbohydrate degradation; glycolysis; pyruvate from D-glyceraldehyde 3-phosphate: step 4/5. Catalyzes the reversible conversion of 2-phosphoglycerate (2-PG) into phosphoenolpyruvate (PEP). It is essential for the degradation of carbohydrates via glycolysis. The polypeptide is Enolase (Lachnospira eligens (strain ATCC 27750 / DSM 3376 / VPI C15-48 / C15-B4) (Eubacterium eligens)).